The sequence spans 513 residues: Probable G-protein coupled receptor 176 (513 aa).

The disordered stretch occupies residues 1–25; the sequence is MGHNGSWVSPNTSHPRNTSGAQAGA. Over 1–41 the chain is Extracellular; it reads MGHNGSWVSPNTSHPRNTSGAQAGANSSAFGELSEAQLYRQ. Asparagine 4, asparagine 11, asparagine 17, and asparagine 26 each carry an N-linked (GlcNAc...) asparagine glycan. Residues 42–64 traverse the membrane as a helical segment; the sequence is FTTTVQVVIFIGSLLGNFTVLWS. The Cytoplasmic portion of the chain corresponds to 65 to 77; that stretch reads TCRTTVFKSVTNR. Residues 78–98 traverse the membrane as a helical segment; sequence FIKNLACSGICASVVCVPFDI. Residues 99–108 lie on the Extracellular side of the membrane; the sequence is ILSTSPHCCW. The helical transmembrane segment at 109 to 129 threads the bilayer; sequence WIYTMLFCKVLKFLHKVFCSV. The Cytoplasmic portion of the chain corresponds to 130–157; sequence TVLSFPAIALDRYYSVLYPLERKISDAK. The chain crosses the membrane as a helical span at residues 158–177; that stretch reads SRELVMYIWAHAVVASVPVF. Residues 178–204 lie on the Extracellular side of the membrane; it reads AVTNVADIYATSTCTEVWSNSLGHLVY. Residues 205–225 form a helical membrane-spanning segment; that stretch reads VLIYNVTTVIVPVAVVFLFLI. Residues 226 to 264 lie on the Cytoplasmic side of the membrane; sequence LIRRALSASQKKKVIIAALRTPQNTISIPYASQREAELH. A helical membrane pass occupies residues 265-285; it reads ATLLSMVTVFILCSVPYATLV. Residues 286–301 lie on the Extracellular side of the membrane; sequence VYQTVLNVPNTSVFLL. A helical membrane pass occupies residues 302 to 322; that stretch reads LTAIWLPKVSLLANPVLFLTV. Residues 323–513 are Cytoplasmic-facing; it reads NRSVRKCLVG…KVSIFPKVDS (191 aa). A disordered region spans residues 404 to 432; it reads VLTSSPEGEESQLAPSVPPPGTVDSVSRV.

This sequence belongs to the G-protein coupled receptor 1 family. In terms of tissue distribution, expressed in brain, lung, heart, stomach, intestine, cultured aortic smooth muscle cells and cardiac myocytes.

It localises to the cell membrane. Orphan receptor involved in normal circadian rhythm behavior. Acts through the G-protein subclass G(z)-alpha and has an agonist-independent basal activity to repress cAMP production. This Rattus norvegicus (Rat) protein is Probable G-protein coupled receptor 176 (Gpr176).